The following is a 221-amino-acid chain: Thiamine-phosphate synthase (221 aa).

Residues 46–50 (QFREK) and Asn-82 each bind 4-amino-2-methyl-5-(diphosphooxymethyl)pyrimidine. Mg(2+)-binding residues include Asp-83 and Asp-102. Residue Ser-121 participates in 4-amino-2-methyl-5-(diphosphooxymethyl)pyrimidine binding. 148–150 (TQS) is a binding site for 2-[(2R,5Z)-2-carboxy-4-methylthiazol-5(2H)-ylidene]ethyl phosphate. A 4-amino-2-methyl-5-(diphosphooxymethyl)pyrimidine-binding site is contributed by Lys-151. Residues Gly-180 and 200–201 (IS) contribute to the 2-[(2R,5Z)-2-carboxy-4-methylthiazol-5(2H)-ylidene]ethyl phosphate site.

The protein belongs to the thiamine-phosphate synthase family. The cofactor is Mg(2+).

The enzyme catalyses 2-[(2R,5Z)-2-carboxy-4-methylthiazol-5(2H)-ylidene]ethyl phosphate + 4-amino-2-methyl-5-(diphosphooxymethyl)pyrimidine + 2 H(+) = thiamine phosphate + CO2 + diphosphate. The catalysed reaction is 2-(2-carboxy-4-methylthiazol-5-yl)ethyl phosphate + 4-amino-2-methyl-5-(diphosphooxymethyl)pyrimidine + 2 H(+) = thiamine phosphate + CO2 + diphosphate. It catalyses the reaction 4-methyl-5-(2-phosphooxyethyl)-thiazole + 4-amino-2-methyl-5-(diphosphooxymethyl)pyrimidine + H(+) = thiamine phosphate + diphosphate. Its pathway is cofactor biosynthesis; thiamine diphosphate biosynthesis; thiamine phosphate from 4-amino-2-methyl-5-diphosphomethylpyrimidine and 4-methyl-5-(2-phosphoethyl)-thiazole: step 1/1. Functionally, condenses 4-methyl-5-(beta-hydroxyethyl)thiazole monophosphate (THZ-P) and 2-methyl-4-amino-5-hydroxymethyl pyrimidine pyrophosphate (HMP-PP) to form thiamine monophosphate (TMP). This chain is Thiamine-phosphate synthase, found in Pasteurella multocida (strain Pm70).